A 257-amino-acid polypeptide reads, in one-letter code: Phosphonates import ATP-binding protein PhnC (257 aa).

Positions 4–248 constitute an ABC transporter domain; that stretch reads IEFKNVSKVY…IFSEIYGRTI (245 aa). 37–44 contacts ATP; the sequence is GLSGAGKS.

Belongs to the ABC transporter superfamily. Phosphonates importer (TC 3.A.1.9.1) family. As to quaternary structure, the complex is composed of two ATP-binding proteins (PhnC), two transmembrane proteins (PhnE) and a solute-binding protein (PhnD).

Its subcellular location is the cell membrane. It catalyses the reaction phosphonate(out) + ATP + H2O = phosphonate(in) + ADP + phosphate + H(+). In terms of biological role, part of the ABC transporter complex PhnCDE involved in phosphonates import. Responsible for energy coupling to the transport system. The chain is Phosphonates import ATP-binding protein PhnC from Staphylococcus aureus (strain bovine RF122 / ET3-1).